The chain runs to 360 residues: Mannan endo-1,4-beta-mannosidase (360 aa).

The first 24 residues, 1–24 (MLKKLAVCLSIVLLLLGAASPISA), serve as a signal peptide directing secretion. The 312-residue stretch at 36–347 (QTTKDIMNWL…YQNSWTLNKG (312 aa)) folds into the GH26 domain. His129 contributes to the substrate binding site. Glu191 acts as the Proton donor in catalysis. Substrate contacts are provided by Trp196 and Tyr266. Glu290 acts as the Nucleophile in catalysis.

It belongs to the glycosyl hydrolase 26 family. Homodimer.

The protein localises to the secreted. The enzyme catalyses Random hydrolysis of (1-&gt;4)-beta-D-mannosidic linkages in mannans, galactomannans and glucomannans.. In terms of biological role, involved in the degradation of glucomannan. Catalyzes the endo hydrolysis of beta-1,4-linked mannan, galactomannan and glucomannan. The protein is Mannan endo-1,4-beta-mannosidase of Bacillus subtilis.